A 124-amino-acid polypeptide reads, in one-letter code: Histone H2B (124 aa).

The disordered stretch occupies residues 1–33 (MPEPAKSAPKKGSKKAVTKTAGKGGKKRKRSRK). N6-acetyllysine occurs at positions 6 and 11. Residues 8–17 (APKKGSKKAV) are compositionally biased toward basic residues. S13 is modified (phosphoserine). K14 and K19 each carry N6-acetyllysine. S111 is a glycosylation site (O-linked (GlcNAc) serine). A Glycyl lysine isopeptide (Lys-Gly) (interchain with G-Cter in ubiquitin) cross-link involves residue K119.

The protein belongs to the histone H2B family. In terms of assembly, the nucleosome is a histone octamer containing two molecules each of H2A, H2B, H3 and H4 assembled in one H3-H4 heterotetramer and two H2A-H2B heterodimers. The octamer wraps approximately 147 bp of DNA. In terms of processing, monoubiquitination of Lys-119 by BRE1 gives a specific tag for epigenetic transcriptional activation and is also prerequisite for histone H3 'Lys-4' and 'Lys-79' methylation. Phosphorylated during apoptosis; which facilitates apoptotic chromatin condensation. Post-translationally, glcNAcylation at Ser-111 promotes monoubiquitination of Lys-119. It fluctuates in response to extracellular glucose, and associates with transcribed genes.

Its subcellular location is the nucleus. The protein localises to the chromosome. Its function is as follows. Core component of nucleosome. Nucleosomes wrap and compact DNA into chromatin, limiting DNA accessibility to the cellular machineries which require DNA as a template. Histones thereby play a central role in transcription regulation, DNA repair, DNA replication and chromosomal stability. DNA accessibility is regulated via a complex set of post-translational modifications of histones, also called histone code, and nucleosome remodeling. The protein is Histone H2B of Oncorhynchus mykiss (Rainbow trout).